The chain runs to 357 residues: N-acetyl-gamma-glutamyl-phosphate reductase (357 aa).

C160 is a catalytic residue.

Belongs to the NAGSA dehydrogenase family. Type 1 subfamily.

The protein resides in the cytoplasm. The enzyme catalyses N-acetyl-L-glutamate 5-semialdehyde + phosphate + NADP(+) = N-acetyl-L-glutamyl 5-phosphate + NADPH + H(+). The protein operates within amino-acid biosynthesis; L-arginine biosynthesis; N(2)-acetyl-L-ornithine from L-glutamate: step 3/4. In terms of biological role, catalyzes the NADPH-dependent reduction of N-acetyl-5-glutamyl phosphate to yield N-acetyl-L-glutamate 5-semialdehyde. In Parasynechococcus marenigrum (strain WH8102), this protein is N-acetyl-gamma-glutamyl-phosphate reductase.